The sequence spans 181 residues: BURP domain-containing protein 7 (181 aa).

Residues 1-21 (MARSLAALLLLLVAAAGDSHA) form the signal peptide. The BURP domain occupies 65-181 (FFLEKDLFPG…RRGRRTGWRP (117 aa)). The interval 112 to 181 (QLSVPAGSPA…RRGRRTGWRP (70 aa)) is disordered. A compositionally biased stretch (basic residues) spans 128–143 (RPRRSPARRSNARRRS). Low complexity predominate over residues 144-157 (SPWWSSPRPASAPA). A compositionally biased stretch (basic residues) spans 170 to 181 (GRRRGRRTGWRP).

As to expression, expressed in roots, stems, leaves and shoot.

This Oryza sativa subsp. japonica (Rice) protein is BURP domain-containing protein 7 (BURP7).